Here is a 47-residue protein sequence, read N- to C-terminus: Photosystem II reaction center protein Psb30 (47 aa).

A helical membrane pass occupies residues 19–39; the sequence is VIFQLLSVALIVIAGPVVIFL.

Belongs to the Psb30/Ycf12 family. In terms of assembly, PSII is composed of 1 copy each of membrane proteins PsbA, PsbB, PsbC, PsbD, PsbE, PsbF, PsbH, PsbI, PsbJ, PsbK, PsbL, PsbM, PsbT, PsbX, PsbY, PsbZ, Psb30/Ycf12, peripheral proteins PsbO, CyanoQ (PsbQ), PsbU, PsbV and a large number of cofactors. It forms dimeric complexes.

It localises to the cellular thylakoid membrane. Its function is as follows. A core subunit of photosystem II (PSII), probably helps stabilize the reaction center. This chain is Photosystem II reaction center protein Psb30, found in Nostoc punctiforme (strain ATCC 29133 / PCC 73102).